Reading from the N-terminus, the 149-residue chain is Macrodomain Ter protein (149 aa).

The protein belongs to the MatP family. Homodimer.

The protein localises to the cytoplasm. Required for spatial organization of the terminus region of the chromosome (Ter macrodomain) during the cell cycle. Prevents early segregation of duplicated Ter macrodomains during cell division. Binds specifically to matS, which is a 13 bp signature motif repeated within the Ter macrodomain. The polypeptide is Macrodomain Ter protein (Vibrio vulnificus (strain CMCP6)).